A 581-amino-acid chain; its full sequence is Tricyclene synthase Oc15, chloroplastic (581 aa).

The transit peptide at 1-68 directs the protein to the chloroplast; sequence MAFCISYVGA…ALCLNEHSLS (68 aa). 3 N-linked (GlcNAc...) asparagine glycosylation sites follow: Asn27, Asn206, and Asn319. Residues Asp338 and Asp342 each contribute to the Mg(2+) site. A DDXXD motif motif is present at residues 338–342; it reads DDIFD. 2 N-linked (GlcNAc...) asparagine glycosylation sites follow: Asn384 and Asn465. Mg(2+)-binding residues include Asn482, Ser486, and Glu490. An N-linked (GlcNAc...) asparagine glycan is attached at Asn509.

This sequence belongs to the terpene synthase family. Tpsg subfamily. The cofactor is Mg(2+). Mn(2+) serves as cofactor. In terms of tissue distribution, accumulates in flowers; mostly expressed in both upper and lower petal lobes, and, to a lower extent, in tube and stamens.

It localises to the plastid. It is found in the chloroplast stroma. It catalyses the reaction (2E)-geranyl diphosphate = tricyclene + diphosphate. The enzyme catalyses (2E)-geranyl diphosphate = beta-myrcene + diphosphate. It participates in secondary metabolite biosynthesis; terpenoid biosynthesis. In terms of biological role, contributes to floral scent emission. The protein is Tricyclene synthase Oc15, chloroplastic (Oc15) of Antirrhinum majus (Garden snapdragon).